A 130-amino-acid chain; its full sequence is Small ribosomal subunit protein uS8 (130 aa).

It belongs to the universal ribosomal protein uS8 family. Part of the 30S ribosomal subunit. Contacts proteins S5 and S12.

Its function is as follows. One of the primary rRNA binding proteins, it binds directly to 16S rRNA central domain where it helps coordinate assembly of the platform of the 30S subunit. This Shewanella piezotolerans (strain WP3 / JCM 13877) protein is Small ribosomal subunit protein uS8.